Here is a 261-residue protein sequence, read N- to C-terminus: MGRVSAWEALLLGVVEGLTEFLPVSSTGHLTLLFHLLGLPVEEDPFLKTFLVAIQLGAILAVLLLYGRRLAADRALWLRIAVAFVPTGVIGFLFYPLIKGVILGNDAVVAFFLFFVGAVLLFADRLAERAQYQDVKALPLARVAWIGVFQGLAALFPGTSRSGATILGGLLLGLNRQAAAEFSFLLALPTMFAAVGYDLWKSAPEVPEGGWSLLLLGFLAALVTALVTVRWMLAFVARHGFRPFALYRMALAAVYAFFFLR.

The next 8 membrane-spanning stretches (helical) occupy residues 9–31, 46–66, 80–100, 102–122, 137–157, 180–200, 209–229, and 240–260; these read ALLL…GHLT, FLKT…LLLY, IAVA…LIKG, ILGN…VLLF, ALPL…ALFP, AEFS…YDLW, GGWS…LVTV, and GFRP…FFFL.

This sequence belongs to the UppP family.

The protein resides in the cell inner membrane. It carries out the reaction di-trans,octa-cis-undecaprenyl diphosphate + H2O = di-trans,octa-cis-undecaprenyl phosphate + phosphate + H(+). In terms of biological role, catalyzes the dephosphorylation of undecaprenyl diphosphate (UPP). Confers resistance to bacitracin. The chain is Undecaprenyl-diphosphatase from Thermus thermophilus (strain ATCC 27634 / DSM 579 / HB8).